We begin with the raw amino-acid sequence, 201 residues long: FMN-dependent NADH:quinone oxidoreductase (201 aa).

FMN-binding positions include serine 10, 16 to 18 (SQS), 96 to 99 (MYNF), and 140 to 143 (SRGG).

It belongs to the azoreductase type 1 family. As to quaternary structure, homodimer. FMN serves as cofactor.

It catalyses the reaction 2 a quinone + NADH + H(+) = 2 a 1,4-benzosemiquinone + NAD(+). The catalysed reaction is N,N-dimethyl-1,4-phenylenediamine + anthranilate + 2 NAD(+) = 2-(4-dimethylaminophenyl)diazenylbenzoate + 2 NADH + 2 H(+). Quinone reductase that provides resistance to thiol-specific stress caused by electrophilic quinones. Its function is as follows. Also exhibits azoreductase activity. Catalyzes the reductive cleavage of the azo bond in aromatic azo compounds to the corresponding amines. The chain is FMN-dependent NADH:quinone oxidoreductase from Escherichia coli O157:H7.